A 41-amino-acid polypeptide reads, in one-letter code: Protein UL21 homolog (41 aa).

It belongs to the herpesviridae UL21 family.

The chain is Protein UL21 homolog from Equine herpesvirus 4 (strain 1942) (EHV-4).